The sequence spans 55 residues: Large ribosomal subunit protein bL33 (55 aa).

This sequence belongs to the bacterial ribosomal protein bL33 family.

The chain is Large ribosomal subunit protein bL33 from Bradyrhizobium diazoefficiens (strain JCM 10833 / BCRC 13528 / IAM 13628 / NBRC 14792 / USDA 110).